An 89-amino-acid polypeptide reads, in one-letter code: Signal recognition particle 19 kDa protein (89 aa).

This sequence belongs to the SRP19 family. As to quaternary structure, part of the signal recognition particle protein translocation system, which is composed of SRP and FtsY. Archaeal SRP consists of a 7S RNA molecule of 300 nucleotides and two protein subunits: SRP54 and SRP19.

It is found in the cytoplasm. Involved in targeting and insertion of nascent membrane proteins into the cytoplasmic membrane. Binds directly to 7S RNA and mediates binding of the 54 kDa subunit of the SRP. In Methanococcus maripaludis (strain DSM 14266 / JCM 13030 / NBRC 101832 / S2 / LL), this protein is Signal recognition particle 19 kDa protein.